Here is a 160-residue protein sequence, read N- to C-terminus: Dr hemagglutinin structural subunit (160 aa).

Residues 1 to 21 (MKKLAIMAAASMVFAVSSAHA) form the signal peptide. The tract at residues 22 to 75 (GFTPSGTTGTTKLTVTEECQVRVGDLTVAKTRGQLTDAAPIGPVTVQALGCDAR) is receptor-binding.

Belongs to the Dr-adhesin family.

The protein localises to the fimbrium. In terms of biological role, hemagglutinins of uropathogenic E.coli mediate adherence to the upper urinary tract. These adhesins bind to the Dr blood group antigen and also agglutinate human erythrocytes in the presence of D-mannose (mannose-resistant hemagglutination (MRHA)). This Escherichia coli protein is Dr hemagglutinin structural subunit (draA).